The chain runs to 88 residues: Large ribosomal subunit protein eL34 (88 aa).

It belongs to the eukaryotic ribosomal protein eL34 family.

The protein is Large ribosomal subunit protein eL34 of Methanobrevibacter smithii (strain ATCC 35061 / DSM 861 / OCM 144 / PS).